A 574-amino-acid chain; its full sequence is Putative ABC transporter ATP-binding protein VVA0347 (574 aa).

ABC transporter domains are found at residues 3 to 244 and 299 to 533; these read IEFS…GIRE and LDVR…ANLT. Residues 37-44 and 332-339 each bind ATP; these read GPSGSGKS and GKNGSGKS.

The protein belongs to the ABC transporter superfamily.

Its subcellular location is the cell inner membrane. Its function is as follows. Probably part of an ABC transporter complex. Responsible for energy coupling to the transport system. This chain is Putative ABC transporter ATP-binding protein VVA0347, found in Vibrio vulnificus (strain YJ016).